The following is a 61-amino-acid chain: Tryptophyllin-T1 (61 aa).

Positions 1-22 are cleaved as a signal peptide; the sequence is MDFLKKSLFLVLFLGLVSISLC. Positions 23-53 are excised as a propeptide; sequence DEEKRQDDDEASEREEKKEIHEEGNQEERRD. The segment at 25–61 is disordered; sequence EKRQDDDEASEREEKKEIHEEGNQEERRDRPPSWIPK. Over residues 36–55 the composition is skewed to basic and acidic residues; the sequence is REEKKEIHEEGNQEERRDRP. Proline 56 bears the 4-hydroxyproline; partial mark.

It belongs to the frog skin active peptide (FSAP) family. Tryptophillin subfamily. In terms of tissue distribution, expressed by the skin glands.

The protein localises to the secreted. This Pithecopus azureus (Orange-legged monkey tree frog) protein is Tryptophyllin-T1.